Reading from the N-terminus, the 128-residue chain is Large ribosomal subunit protein bL17 (128 aa).

Belongs to the bacterial ribosomal protein bL17 family. In terms of assembly, part of the 50S ribosomal subunit. Contacts protein L32.

This Enterobacter sp. (strain 638) protein is Large ribosomal subunit protein bL17.